We begin with the raw amino-acid sequence, 144 residues long: Large ribosomal subunit protein uL15 (144 aa).

The tract at residues 1 to 53 (MRLNTLSPAEGSKHASKRPGRGIGSGLGKTGGRGHKGQKSRSGGGVRRGFEGG) is disordered. A compositionally biased stretch (gly residues) spans 21–31 (RGIGSGLGKTG).

It belongs to the universal ribosomal protein uL15 family. Part of the 50S ribosomal subunit.

In terms of biological role, binds to the 23S rRNA. The sequence is that of Large ribosomal subunit protein uL15 from Sodalis glossinidius (strain morsitans).